The sequence spans 234 residues: Lactate utilization protein C 1 (234 aa).

Belongs to the LutC/YkgG family.

Is involved in L-lactate degradation and allows cells to grow with lactate as the sole carbon source. In Bacillus mycoides (strain KBAB4) (Bacillus weihenstephanensis), this protein is Lactate utilization protein C 1.